The chain runs to 212 residues: Stromal cell-derived factor 2-like protein (212 aa).

The first 19 residues, 1 to 19 (MKSLFLILILCITIPLIFA), serve as a signal peptide directing secretion. N20 carries N-linked (GlcNAc...) asparagine glycosylation. 3 consecutive MIR domains span residues 29–86 (ITKV…IKGP), 94–149 (GTVV…VETE), and 151–206 (GKEW…TEEG).

Its subcellular location is the secreted. This chain is Stromal cell-derived factor 2-like protein, found in Dictyostelium discoideum (Social amoeba).